A 346-amino-acid polypeptide reads, in one-letter code: Anthranilate phosphoribosyltransferase (346 aa).

5-phospho-alpha-D-ribose 1-diphosphate is bound by residues Gly81, 84 to 85 (GD), 91 to 94 (NVST), 109 to 117 (KHGGRSVSS), and Ser121. An anthranilate-binding site is contributed by Gly81. Ser93 contacts Mg(2+). Arg167 is a binding site for anthranilate. Positions 226 and 227 each coordinate Mg(2+).

Belongs to the anthranilate phosphoribosyltransferase family. As to quaternary structure, homodimer. It depends on Mg(2+) as a cofactor.

It catalyses the reaction N-(5-phospho-beta-D-ribosyl)anthranilate + diphosphate = 5-phospho-alpha-D-ribose 1-diphosphate + anthranilate. Its pathway is amino-acid biosynthesis; L-tryptophan biosynthesis; L-tryptophan from chorismate: step 2/5. In terms of biological role, catalyzes the transfer of the phosphoribosyl group of 5-phosphorylribose-1-pyrophosphate (PRPP) to anthranilate to yield N-(5'-phosphoribosyl)-anthranilate (PRA). In Marinomonas sp. (strain MWYL1), this protein is Anthranilate phosphoribosyltransferase.